The chain runs to 203 residues: Guanylate kinase (203 aa).

One can recognise a Guanylate kinase-like domain in the interval 5 to 184 (GMLIVLSGPS…AVQRIEKIIE (180 aa)). 12–19 (GPSGVGKG) serves as a coordination point for ATP.

The protein belongs to the guanylate kinase family.

It localises to the cytoplasm. It catalyses the reaction GMP + ATP = GDP + ADP. Essential for recycling GMP and indirectly, cGMP. The sequence is that of Guanylate kinase from Latilactobacillus sakei subsp. sakei (strain 23K) (Lactobacillus sakei subsp. sakei).